Consider the following 46-residue polypeptide: Ligatoxin-B (46 aa).

Disulfide bonds link cysteine 3–cysteine 40, cysteine 4–cysteine 32, and cysteine 16–cysteine 26.

The protein belongs to the plant thionin (TC 1.C.44) family.

The protein localises to the secreted. In terms of biological role, thionins are small plant proteins which are toxic to animal cells. They seem to exert their toxic effect at the level of the cell membrane. Their precise function is not known. The polypeptide is Ligatoxin-B (Phoradendron liga (Argentine mistletoe)).